We begin with the raw amino-acid sequence, 41 residues long: ECTIGDSCVVHRHCRECRCPRGRAMCDREHHKPPHCSCHIH.

In terms of processing, contains four disulfide bonds.

Binds to calcite crystals in the shell and inhibits further shell growth at the binding site. The chain is Perlinhibin from Haliotis laevigata (Smooth Australian abalone).